Reading from the N-terminus, the 143-residue chain is Transcriptional regulator MraZ (143 aa).

SpoVT-AbrB domains are found at residues 5 to 47 (SHAP…PMAE) and 76 to 119 (AADD…DAQR).

Belongs to the MraZ family. In terms of assembly, forms oligomers.

The protein localises to the cytoplasm. Its subcellular location is the nucleoid. This Frankia casuarinae (strain DSM 45818 / CECT 9043 / HFP020203 / CcI3) protein is Transcriptional regulator MraZ.